We begin with the raw amino-acid sequence, 394 residues long: Elongation factor Tu 2 (394 aa).

The tr-type G domain maps to 10-204 (KPHVNVGTIG…YLDSYIPEPE (195 aa)). The tract at residues 19 to 26 (GHVDHGKT) is G1. 19 to 26 (GHVDHGKT) lines the GTP pocket. Thr-26 provides a ligand contact to Mg(2+). Residues 60–64 (GITIN) form a G2 region. The tract at residues 81–84 (DCPG) is G3. GTP contacts are provided by residues 81–85 (DCPGH) and 136–139 (NKCD). A G4 region spans residues 136–139 (NKCD). The interval 174–176 (SAL) is G5.

Belongs to the TRAFAC class translation factor GTPase superfamily. Classic translation factor GTPase family. EF-Tu/EF-1A subfamily. As to quaternary structure, monomer.

The protein localises to the cytoplasm. The enzyme catalyses GTP + H2O = GDP + phosphate + H(+). Its function is as follows. GTP hydrolase that promotes the GTP-dependent binding of aminoacyl-tRNA to the A-site of ribosomes during protein biosynthesis. This is Elongation factor Tu 2 from Yersinia pseudotuberculosis serotype O:1b (strain IP 31758).